Here is a 157-residue protein sequence, read N- to C-terminus: Large ribosomal subunit protein uL15 (157 aa).

The tract at residues 1–56 (MRLEDIRPQPGSTRRRRRLGRGIAAGQGASCGKGMRGQKARKGGGPRPGFEGGQTP) is disordered. A compositionally biased stretch (gly residues) spans 23–35 (IAAGQGASCGKGM).

Belongs to the universal ribosomal protein uL15 family. In terms of assembly, part of the 50S ribosomal subunit.

Binds to the 23S rRNA. This is Large ribosomal subunit protein uL15 from Synechococcus sp. (strain JA-3-3Ab) (Cyanobacteria bacterium Yellowstone A-Prime).